The chain runs to 107 residues: Heme-degrading monooxygenase (107 aa).

One can recognise an ABM domain in the interval 2 to 94 (IIVTNTAKIT…YILDNKITYY (93 aa)). Residue N6 coordinates Fe cation. A heme-binding site is contributed by H76.

This sequence belongs to the antibiotic biosynthesis monooxygenase family. Heme-degrading monooxygenase IsdG subfamily. In terms of assembly, homodimer.

It is found in the cytoplasm. The catalysed reaction is heme b + 3 reduced [NADPH--hemoprotein reductase] + 3 O2 = biliverdin IXalpha + CO + Fe(2+) + 3 oxidized [NADPH--hemoprotein reductase] + 3 H2O + H(+). Functionally, allows bacterial pathogens to use the host heme as an iron source. Catalyzes the oxidative degradation of the heme macrocyclic porphyrin ring to the biliverdin in the presence of a suitable electron donor such as ascorbate or NADPH--cytochrome P450 reductase, with subsequent release of free iron. In Bacillus thuringiensis subsp. konkukian (strain 97-27), this protein is Heme-degrading monooxygenase.